Consider the following 323-residue polypeptide: tRNA U34 carboxymethyltransferase (323 aa).

Residues K91, W105, K110, G130, 152–154, 181–182, M196, Y200, and R315 each bind carboxy-S-adenosyl-L-methionine; these read DPT and IE.

This sequence belongs to the class I-like SAM-binding methyltransferase superfamily. CmoB family. In terms of assembly, homotetramer.

The enzyme catalyses carboxy-S-adenosyl-L-methionine + 5-hydroxyuridine(34) in tRNA = 5-carboxymethoxyuridine(34) in tRNA + S-adenosyl-L-homocysteine + H(+). In terms of biological role, catalyzes carboxymethyl transfer from carboxy-S-adenosyl-L-methionine (Cx-SAM) to 5-hydroxyuridine (ho5U) to form 5-carboxymethoxyuridine (cmo5U) at position 34 in tRNAs. This is tRNA U34 carboxymethyltransferase from Escherichia coli (strain SE11).